The sequence spans 341 residues: MLVLGLETSCDETGVALYDSERGLLADALFSQIDLHRVFGGVVPELASRDHVKRMLPLIRQVLDEAGCVATEIDAIAYTAGPGLVGALLVGASCAQALAFAWDIPAIGVHHMEGHLLAPMLEENPPEFPFVALLVSGGHTQLVRVDGIGQYELLGESLDDAAGEAFDKTAKLIGLNYPGGPEIARLAEQGVPGRFVFPRPMTDRPGLEFSFSGLKTFALNTWQQCKNAGDDSEQTRCDLSLAFQQAVVETLTIKCKRALKQTGLKRLVIAGGVSANKALRASLEDMLGSIKGNVYYARPQFCTDNGAMIAYAGCQRLLAGQQQDLAISVQARWPMEQLPPL.

Fe cation-binding residues include H111 and H115. Residues 134-138 (LVSGG), D167, G180, and N276 each bind substrate. D304 serves as a coordination point for Fe cation.

The protein belongs to the KAE1 / TsaD family. Fe(2+) is required as a cofactor.

The protein resides in the cytoplasm. It carries out the reaction L-threonylcarbamoyladenylate + adenosine(37) in tRNA = N(6)-L-threonylcarbamoyladenosine(37) in tRNA + AMP + H(+). In terms of biological role, required for the formation of a threonylcarbamoyl group on adenosine at position 37 (t(6)A37) in tRNAs that read codons beginning with adenine. Is involved in the transfer of the threonylcarbamoyl moiety of threonylcarbamoyl-AMP (TC-AMP) to the N6 group of A37, together with TsaE and TsaB. TsaD likely plays a direct catalytic role in this reaction. In Pseudomonas putida (strain ATCC 47054 / DSM 6125 / CFBP 8728 / NCIMB 11950 / KT2440), this protein is tRNA N6-adenosine threonylcarbamoyltransferase.